Consider the following 79-residue polypeptide: Cytochrome c oxidase assembly factor 6 homolog (79 aa).

A CHCH domain is found at 9-52 (RQACWGARDLYWRCLDDNAEDAARCQKLRSSFEASCPQQWIKYF). The short motif at 12-22 (CWGARDLYWRC) is the Cx9C motif element. 2 cysteine pairs are disulfide-bonded: C12–C44 and C22–C33. The short motif at 33-44 (CQKLRSSFEASC) is the Cx10C motif element.

The protein belongs to the cytochrome c oxidase subunit 6B family. As to quaternary structure, found in a complex with TMEM177, COX20, MT-CO2/COX2, COX18, SCO1 and SCO2. Interacts with COA1, MT-CO2/COX2, SCO1, SCO2 and COX20. Interacts with COX20 in a MT-CO2/COX2- and COX18-dependent manner. Interacts with COX16.

It is found in the mitochondrion. It localises to the mitochondrion intermembrane space. In terms of biological role, involved in the maturation of the mitochondrial respiratory chain complex IV subunit MT-CO2/COX2. Thereby, may regulate early steps of complex IV assembly. Mitochondrial respiratory chain complex IV or cytochrome c oxidase is the component of the respiratory chain that catalyzes the transfer of electrons from intermembrane space cytochrome c to molecular oxygen in the matrix and as a consequence contributes to the proton gradient involved in mitochondrial ATP synthesis. May also be required for efficient formation of respiratory supercomplexes comprised of complexes III and IV. This chain is Cytochrome c oxidase assembly factor 6 homolog (Coa6), found in Mus musculus (Mouse).